A 263-amino-acid polypeptide reads, in one-letter code: Receptor-transporting protein 1 (263 aa).

The Cytoplasmic portion of the chain corresponds to 1–238 (MRIFRPWRLR…ETGSGCNFCS (238 aa)). Residues 88-197 (ASGRFHCSWC…GEFCEACQEG (110 aa)) form a 3CxxC-type zinc finger. Residues 239-259 (IPWCLFWATVLMLIIYLQFSF) traverse the membrane as a helical segment. Residues 260 to 263 (RTSV) lie on the Extracellular side of the membrane.

It belongs to the TMEM7 family. Interacts with olfactory receptors. As to expression, predominantly expressed in olfactory and vomeronasal organs, in mature olfactory sensory neurons.

The protein localises to the cell membrane. Specifically promotes functional cell surface expression of olfactory receptors, but not of other GPCRs. This is Receptor-transporting protein 1 (Rtp1) from Mus musculus (Mouse).